Here is an 86-residue protein sequence, read N- to C-terminus: Small ribosomal subunit protein bS20 (86 aa).

Residues 1–25 (MANIKSQIKRIRTNEKARQRNKAYK) are disordered. Residues 12–25 (RTNEKARQRNKAYK) are compositionally biased toward basic and acidic residues.

This sequence belongs to the bacterial ribosomal protein bS20 family.

In terms of biological role, binds directly to 16S ribosomal RNA. The protein is Small ribosomal subunit protein bS20 of Beutenbergia cavernae (strain ATCC BAA-8 / DSM 12333 / CCUG 43141 / JCM 11478 / NBRC 16432 / NCIMB 13614 / HKI 0122).